Here is a 138-residue protein sequence, read N- to C-terminus: ATP synthase epsilon chain, chloroplastic (138 aa).

It belongs to the ATPase epsilon chain family. In terms of assembly, F-type ATPases have 2 components, CF(1) - the catalytic core - and CF(0) - the membrane proton channel. CF(1) has five subunits: alpha(3), beta(3), gamma(1), delta(1), epsilon(1). CF(0) has three main subunits: a, b and c.

Its subcellular location is the plastid. The protein resides in the chloroplast thylakoid membrane. Produces ATP from ADP in the presence of a proton gradient across the membrane. The polypeptide is ATP synthase epsilon chain, chloroplastic (Anthoceros angustus (Hornwort)).